Here is an 863-residue protein sequence, read N- to C-terminus: Ribosomal protein S6 kinase alpha-5 (863 aa).

Gly residues predominate over residues 1–21 (MEGEGGGSGGAGTSGDSGDGG). The segment at 1 to 22 (MEGEGGGSGGAGTSGDSGDGGE) is disordered. A Protein kinase 1 domain is found at 48 to 317 (FELLKVLGTG…AEEIKEHLFF (270 aa)). ATP-binding positions include 54 to 62 (LGTGAYGKV) and Lys80. Residue Asp176 is the Proton acceptor of the active site. At Ser211 the chain carries Phosphoserine; by autocatalysis. Residues 318–386 (EKIKWDDLAA…VAPSILFKRN (69 aa)) enclose the AGC-kinase C-terminal domain. Residue Ser359 is modified to Phosphoserine; by MAPK1, MAPK3 and MAPK14. Ser375 and Ser380 each carry phosphoserine; by autocatalysis. The Protein kinase 2 domain maps to 428-675 (DKPLGEGSFS…SCDLWSLGVI (248 aa)). Residues 431-440 (LGEGSFSICR) and Lys454 each bind ATP. The active-site Proton acceptor is Asp608. At Thr645 the chain carries Phosphothreonine; by MAPK1, MAPK3 and MAPK14. Phosphoserine is present on residues Ser711, Ser721, Ser755, and Ser759. Position 764 is a phosphothreonine (Thr764). Positions 805 to 863 (AKRRKMKRTSTSTETRSSSSESSRSSSSQSHGKTTPTKTLQPSNPTEGSNPDTLFQFSD) are disordered. The span at 813–832 (TSTSTETRSSSSESSRSSSS) shows a compositional bias: low complexity. Phosphoserine; by autocatalysis occurs at positions 814, 816, and 822. Over residues 833–863 (QSHGKTTPTKTLQPSNPTEGSNPDTLFQFSD) the composition is skewed to polar residues. Ser862 is subject to Phosphoserine.

Belongs to the protein kinase superfamily. AGC Ser/Thr protein kinase family. S6 kinase subfamily. As to quaternary structure, forms a complex with either MAPK1/ERK2 or MAPK3/ERK1 in quiescent cells which transiently dissociates following mitogenic stimulation. Also associates with MAPK14/p38-alpha. Activated RPS6KA5 associates with and phosphorylates the NF-kappa-B p65 subunit RELA. Interacts with CREBBP and EP300. Mg(2+) is required as a cofactor. Ser-375 and Thr-645 phosphorylation is required for kinase activity. Ser-375 and Ser-211 are autophosphorylated by the C-terminal kinase domain, and their phosphorylation is essential for the catalytic activity of the N-terminal kinase domain. Phosphorylated at Ser-359, Thr-645 and Thr-764 by MAPK1/ERK2, MAPK3/ERK1 and MAPK14/p38-alpha. Autophosphorylated at Ser-814, Ser-816 and Ser-822 by the N-terminal kinase domain. Post-translationally, ubiquitinated.

The protein localises to the nucleus. It catalyses the reaction L-seryl-[protein] + ATP = O-phospho-L-seryl-[protein] + ADP + H(+). It carries out the reaction L-threonyl-[protein] + ATP = O-phospho-L-threonyl-[protein] + ADP + H(+). With respect to regulation, activated by phosphorylation at Ser-359, Thr-645 and Thr-764 by MAPK1/ERK2, MAPK3/ERK1 and MAPK14/p38-alpha, and by further autophosphorylation of Ser-211, Ser-375 and Ser-380 by the activated C-terminal kinase domain. The active N-terminal kinase domain finally phosphorylates downstream substrates, as well as Ser-814, Ser-816 and Ser-822 in its own C-terminal region. Functionally, serine/threonine-protein kinase that is required for the mitogen or stress-induced phosphorylation of the transcription factors CREB1 and ATF1 and for the regulation of the transcription factors RELA, STAT3 and ETV1/ER81, and that contributes to gene activation by histone phosphorylation and functions in the regulation of inflammatory genes. Phosphorylates CREB1 and ATF1 in response to mitogenic or stress stimuli such as UV-C irradiation, epidermal growth factor (EGF) and anisomycin. Plays an essential role in the control of RELA transcriptional activity in response to TNF and upon glucocorticoid, associates in the cytoplasm with the glucocorticoid receptor NR3C1 and contributes to RELA inhibition and repression of inflammatory gene expression. In skeletal myoblasts is required for phosphorylation of RELA at 'Ser-276' during oxidative stress. In erythropoietin-stimulated cells, is necessary for the 'Ser-727' phosphorylation of STAT3 and regulation of its transcriptional potential. Phosphorylates ETV1/ER81 at 'Ser-191' and 'Ser-216', and thereby regulates its ability to stimulate transcription, which may be important during development and breast tumor formation. Directly represses transcription via phosphorylation of 'Ser-1' of histone H2A. Phosphorylates 'Ser-10' of histone H3 in response to mitogenics, stress stimuli and EGF, which results in the transcriptional activation of several immediate early genes, including proto-oncogenes c-fos/FOS and c-jun/JUN. May also phosphorylate 'Ser-28' of histone H3. Mediates the mitogen- and stress-induced phosphorylation of high mobility group protein 1 (HMGN1/HMG14). In lipopolysaccharide-stimulated primary macrophages, acts downstream of the Toll-like receptor TLR4 to limit the production of pro-inflammatory cytokines. Functions probably by inducing transcription of the MAP kinase phosphatase DUSP1 and the anti-inflammatory cytokine interleukin 10 (IL10), via CREB1 and ATF1 transcription factors. Plays a role in neuronal cell death by mediating the downstream effects of excitotoxic injury. Phosphorylates TRIM7 at 'Ser-106' in response to growth factor signaling via the MEK/ERK pathway, thereby stimulating its ubiquitin ligase activity. The chain is Ribosomal protein S6 kinase alpha-5 (Rps6ka5) from Mus musculus (Mouse).